We begin with the raw amino-acid sequence, 423 residues long: Limonoid 21-O-acetyltransferse (423 aa).

Active-site proton acceptor residues include histidine 152 and aspartate 362.

This sequence belongs to the plant acyltransferase family. In terms of assembly, monomer. Mainly expressed in petioles.

It carries out the reaction isomeliandiol + acetyl-CoA = 21-O-acetyl-isomeliandiol + CoA. Its pathway is secondary metabolite biosynthesis; terpenoid biosynthesis. Its function is as follows. Acetyltransferase involved in the biosynthesis of limonoids triterpene natural products such as azadirachtin, an antifeedant widely used as bioinsecticide, and possessing many medicinal applications including anti-tumoral, anti-malarial, anti-rheumatic, antibacterial, anti-inflammatory, anti-pyretic and diuretic effects. Catalyzes the formation of 21-O-acetyl-isomeliandiol from isomeliandiol. The polypeptide is Limonoid 21-O-acetyltransferse (Melia azedarach (Chinaberry tree)).